The sequence spans 182 residues: MLKRRSNALITLSRTKLFPITTVAYYHRRLLNQQRRAVSTSPKKEIKSLEDLANLDSLDGVDTELIRDLINEHTTKLNIKKELDMLKKFSQEEESGHEIPVKRFIRPLWMFILMGSSVYLLLHFSWWKLEHEERESQLKKEVEILEHQLNELIIQDKTHNTSRGKGSNESTHMKPWYRRWFW.

The N-terminal 45 residues, 1 to 45 (MLKRRSNALITLSRTKLFPITTVAYYHRRLLNQQRRAVSTSPKKE), are a transit peptide targeting the mitochondrion. Topologically, residues 46-107 (IKSLEDLANL…EIPVKRFIRP (62 aa)) are mitochondrial matrix. Residues 108–127 (LWMFILMGSSVYLLLHFSWW) form a helical membrane-spanning segment. A coiled-coil region spans residues 128 to 158 (KLEHEERESQLKKEVEILEHQLNELIIQDKT). The Mitochondrial intermembrane segment spans residues 128–182 (KLEHEERESQLKKEVEILEHQLNELIIQDKTHNTSRGKGSNESTHMKPWYRRWFW).

The protein belongs to the INA17 family. Component of the inner membrane assembly (INA) complex, composed of INA17 and INA22. Interacts with a subset of F(1)F(0)-ATP synthase subunits of the F(1)-domain and the peripheral stalk.

Its subcellular location is the mitochondrion inner membrane. Functionally, component of the INA complex (INAC) that promotes the biogenesis of mitochondrial F(1)F(0)-ATP synthase. INAC facilitates the assembly of the peripheral stalk and promotes the assembly of the catalytic F(1)-domain with the membrane-embedded F(0)-domain. The polypeptide is Inner membrane assembly complex subunit 17 (Saccharomyces cerevisiae (strain YJM789) (Baker's yeast)).